Consider the following 413-residue polypeptide: Putative ankyrin repeat protein L92 (413 aa).

ANK repeat units follow at residues M1–C28, D32–L67, T68–S104, D105–A134, D137–I170, D174–Y208, I212–I242, and S246–I275.

The sequence is that of Putative ankyrin repeat protein L92 from Acanthamoeba polyphaga mimivirus (APMV).